An 89-amino-acid chain; its full sequence is Small ribosomal subunit protein uS17 (89 aa).

It belongs to the universal ribosomal protein uS17 family. In terms of assembly, part of the 30S ribosomal subunit.

In terms of biological role, one of the primary rRNA binding proteins, it binds specifically to the 5'-end of 16S ribosomal RNA. In Xanthomonas campestris pv. campestris (strain B100), this protein is Small ribosomal subunit protein uS17.